We begin with the raw amino-acid sequence, 268 residues long: Peptide transport system ATP-binding protein SapF (268 aa).

The region spanning 6–251 is the ABC transporter domain; that stretch reads LEVRNLSKTF…PLHELTRRLI (246 aa). 47–54 provides a ligand contact to ATP; that stretch reads GENGSGKS.

Belongs to the ABC transporter superfamily.

The protein localises to the cell inner membrane. Its function is as follows. Involved in a peptide intake transport system that plays a role in the resistance to antimicrobial peptides. This Salmonella typhimurium (strain LT2 / SGSC1412 / ATCC 700720) protein is Peptide transport system ATP-binding protein SapF.